A 225-amino-acid polypeptide reads, in one-letter code: uncharacterized protein (225 aa).

This is an uncharacterized protein from Bacillus subtilis (strain 168).